A 1165-amino-acid polypeptide reads, in one-letter code: Chromosome partition protein Smc (1165 aa).

Position 32-39 (32-39) interacts with ATP; sequence PNGSGKSN. Residues 161–503 are a coiled coil; it reads AGVAEFDRKI…ETQRQVWREA (343 aa). Positions 518–630 constitute an SMC hinge domain; that stretch reads QGVHGLISQL…VFRSLELARR (113 aa). 2 coiled-coil regions span residues 672–901 and 946–1010; these read ELAE…LQQR and DLSL…DCDT.

It belongs to the SMC family. In terms of assembly, homodimer.

The protein localises to the cytoplasm. Its function is as follows. Required for chromosome condensation and partitioning. This chain is Chromosome partition protein Smc, found in Gloeobacter violaceus (strain ATCC 29082 / PCC 7421).